Reading from the N-terminus, the 169-residue chain is Small ribosomal subunit protein uS5 (169 aa).

Positions 14–77 constitute an S5 DRBM domain; that stretch reads LQEKVVEVRR…EDAKKNLIVV (64 aa).

Belongs to the universal ribosomal protein uS5 family. In terms of assembly, part of the 30S ribosomal subunit. Contacts proteins S4 and S8.

With S4 and S12 plays an important role in translational accuracy. In terms of biological role, located at the back of the 30S subunit body where it stabilizes the conformation of the head with respect to the body. This chain is Small ribosomal subunit protein uS5, found in Clostridioides difficile (strain 630) (Peptoclostridium difficile).